Reading from the N-terminus, the 1164-residue chain is MALFPAFAGLSEAPDGGSSRKELDWLSNPSFCVGSITSLSQQTEAAPAHVSEGLPLTRSHLKSESSDESDTNKKLKQTSRKKKKEKKKKRKHQHHKKTKRKHGPSSSSRSETDTDSEKDKPSRGVGGSKKESEEPNQGNNAAADTGHRFVWLEDIQAVTGETFRTDKKPDPANWEYKSLYRGDIARYKRKGDSCLGINPKKQCISWEGTSTEKKHSRKQVERYFTKKSVGLMNIDGVAISSKTEPPSSEPISFIPVKDLEDAAPVTTWLNPLGIYDQSTTHWLQGQGPPEQESKQPDAQPDSESAALKAKVEEFNRRVRENPRDTQLWMAFVAFQDEVMKSPGLYAIEEGEQEKRKRSLKLILEKKLAILERAIESNQSSVDLKLAKLKLCTEFWEPSTLVKEWQKLIFLHPNNTALWQKYLLFCQSQFSTFSISKIHSLYGKCLSTLSAVKDGSILSHPALPGTEEAMFALFLQQCHFLRQAGHSEKAISLFQAMVDFTFFKPDSVKDLPTKGQVEFFEPFWDSGEPRAGEKGARGWKAWMHQQERGGWVVINPDEDDDEPEEDDQEIKDKTLPRWQIWLAAERSRDQRHWRPWRPDKTKKQTEEDCEDPERQVLFDDIGQSLIRLSSHDLQFQLVEAFLQFLGVPSGFTPPASCLYLAMDENSIFDNGLYDEKPLTFFNPLFSGASCVGRMDRLGYPRWTRGQNREGEEFIRNVFHLVMPLFSGKEKSQLCFSWLQYEIAKVIWCLHTKNKKRLKSQGKNCKKLAKNLLKEPENCNNFCLWKQYAHLEWLLGNTEDARKVFDTALGMAGSRELKDSDLCELSLLYAELEVELSPEVRRAATARAVHILTKLTESSPYGPYTGQVLAVHILKARKAYEHALQDCLGDSCVSNPAPTDSCSRLISLAKCFMLFQYLTIGIDAAVQIYEQVFAKLNSSVFPEGSGEGDSASSQSWTSVLEAITLMHTSLLRFHMKVSVYPLAPLREALSQALKLYPGNQVLWRSYVQIQNKSHSASKTRRFFDTITRSAKPLEPWLFAIEAEKLRKRLVETVQRLDGREIHATIPETGLMHRIQALFENAMRSDSGSQCPLLWRMYLNFLVSLGNKERSKGVFYKALQNCPWAKVLYLDAVEYFPDEMQEILDLMTEKELRVRLPLEELELLLED.

Disordered regions lie at residues 1 to 25 and 39 to 149; these read MALF…ELDW and LSQQ…GHRF. Ala-2 is modified (N-acetylalanine). The segment covering 61–73 has biased composition (basic and acidic residues); the sequence is LKSESSDESDTNK. The stretch at 61 to 383 forms a coiled coil; the sequence is LKSESSDESD…IESNQSSVDL (323 aa). A compositionally biased stretch (basic residues) spans 74 to 103; that stretch reads KLKQTSRKKKKEKKKKRKHQHHKKTKRKHG. Positions 110-133 are enriched in basic and acidic residues; the sequence is SETDTDSEKDKPSRGVGGSKKESE. Residues 163–266 form an MID/MTR4-interacting domain region; sequence FRTDKKPDPA…KDLEDAAPVT (104 aa). The tract at residues 279 to 305 is disordered; that stretch reads TTHWLQGQGPPEQESKQPDAQPDSESA. HAT repeat units follow at residues 305 to 337, 395 to 427, 758 to 792, 978 to 1010, and 1067 to 1101; these read AALK…FQDE, WEPS…FCQS, SQGK…LEWL, YPLA…IQNK, and GLMH…FLVS.

Belongs to the NRDE2 family. Interacts with MTREX; the interaction is direct and stabilizes NRDE2. Interacts with EXOSC10, EFTUD2 and EIF4A3.

The protein localises to the nucleus speckle. It localises to the nucleus. It is found in the nucleolus. The protein resides in the nucleoplasm. In terms of biological role, protein of the nuclear speckles that regulates RNA degradation and export from the nucleus through its interaction with MTREX an essential factor directing various RNAs to exosomal degradation. Changes the conformation of MTREX, precluding its association with the nuclear exosome and interaction with proteins required for its function in RNA exosomal degradation. Negatively regulates, for instance, the degradation of mRNAs and lncRNAs by inhibiting their MTREX-mediated recruitment to nuclear exosome. By preventing the degradation of RNAs in the nucleus, it promotes their export to the cytoplasm. U5 snRNP-associated RNA splicing factor which is required for efficient splicing of CEP131 pre-mRNA and plays an important role in centrosome maturation, integrity and function during mitosis. Suppresses intron retention in a subset of pre-mRNAs containing short, GC-rich introns with relatively weak 5' and 3' splice sites. Plays a role in DNA damage response. In Homo sapiens (Human), this protein is Nuclear exosome regulator NRDE2.